The sequence spans 103 residues: Nucleoid-associated protein Cgl0243/cg0297 (103 aa).

The protein belongs to the YbaB/EbfC family. In terms of assembly, homodimer.

The protein resides in the cytoplasm. It is found in the nucleoid. Functionally, binds to DNA and alters its conformation. May be involved in regulation of gene expression, nucleoid organization and DNA protection. The chain is Nucleoid-associated protein Cgl0243/cg0297 from Corynebacterium glutamicum (strain ATCC 13032 / DSM 20300 / JCM 1318 / BCRC 11384 / CCUG 27702 / LMG 3730 / NBRC 12168 / NCIMB 10025 / NRRL B-2784 / 534).